We begin with the raw amino-acid sequence, 360 residues long: Phospho-N-acetylmuramoyl-pentapeptide-transferase (360 aa).

The next 10 helical transmembrane spans lie at 21–41 (YITV…LWIG), 73–93 (TMGG…WANL), 94–114 (ANPY…IGFV), 132–152 (WKYF…YAIG), 168–188 (IMPQ…VGTS), 199–219 (GLAI…AWAT), 235–255 (FSAE…GFLW), 263–283 (VFMG…VAVL), 288–308 (FLLV…ILQV), and 338–358 (VIVR…VTLK).

This sequence belongs to the glycosyltransferase 4 family. MraY subfamily. It depends on Mg(2+) as a cofactor.

It localises to the cell inner membrane. The catalysed reaction is UDP-N-acetyl-alpha-D-muramoyl-L-alanyl-gamma-D-glutamyl-meso-2,6-diaminopimeloyl-D-alanyl-D-alanine + di-trans,octa-cis-undecaprenyl phosphate = di-trans,octa-cis-undecaprenyl diphospho-N-acetyl-alpha-D-muramoyl-L-alanyl-D-glutamyl-meso-2,6-diaminopimeloyl-D-alanyl-D-alanine + UMP. The protein operates within cell wall biogenesis; peptidoglycan biosynthesis. Its function is as follows. Catalyzes the initial step of the lipid cycle reactions in the biosynthesis of the cell wall peptidoglycan: transfers peptidoglycan precursor phospho-MurNAc-pentapeptide from UDP-MurNAc-pentapeptide onto the lipid carrier undecaprenyl phosphate, yielding undecaprenyl-pyrophosphoryl-MurNAc-pentapeptide, known as lipid I. The polypeptide is Phospho-N-acetylmuramoyl-pentapeptide-transferase (Pasteurella multocida (strain Pm70)).